Consider the following 274-residue polypeptide: Malonyl-[acyl-carrier protein] O-methyltransferase (274 aa).

It belongs to the methyltransferase superfamily.

It catalyses the reaction malonyl-[ACP] + S-adenosyl-L-methionine = malonyl-[ACP] methyl ester + S-adenosyl-L-homocysteine. Its pathway is cofactor biosynthesis; biotin biosynthesis. Functionally, converts the free carboxyl group of a malonyl-thioester to its methyl ester by transfer of a methyl group from S-adenosyl-L-methionine (SAM). It allows to synthesize pimeloyl-ACP via the fatty acid synthetic pathway. In Priestia megaterium (strain DSM 319 / IMG 1521) (Bacillus megaterium), this protein is Malonyl-[acyl-carrier protein] O-methyltransferase.